Consider the following 201-residue polypeptide: Superoxide dismutase [Mn] (201 aa).

Residues His27, His81, Asp163, and His167 each coordinate Mn(2+).

This sequence belongs to the iron/manganese superoxide dismutase family. Homodimer. It depends on Mn(2+) as a cofactor.

Its subcellular location is the secreted. The catalysed reaction is 2 superoxide + 2 H(+) = H2O2 + O2. In terms of biological role, destroys superoxide anion radicals which are normally produced within the cells and which are toxic to biological systems. The chain is Superoxide dismutase [Mn] (sodA) from Streptococcus pyogenes serotype M3 (strain ATCC BAA-595 / MGAS315).